A 120-amino-acid polypeptide reads, in one-letter code: Large ribosomal subunit protein bL12 (120 aa).

The protein belongs to the bacterial ribosomal protein bL12 family. Homodimer. Part of the ribosomal stalk of the 50S ribosomal subunit. Forms a multimeric L10(L12)X complex, where L10 forms an elongated spine to which 2 to 4 L12 dimers bind in a sequential fashion. Binds GTP-bound translation factors.

Its function is as follows. Forms part of the ribosomal stalk which helps the ribosome interact with GTP-bound translation factors. Is thus essential for accurate translation. This is Large ribosomal subunit protein bL12 from Pseudoalteromonas translucida (strain TAC 125).